A 307-amino-acid polypeptide reads, in one-letter code: Elongation factor Ts (307 aa).

The tract at residues 79-82 is involved in Mg(2+) ion dislocation from EF-Tu; that stretch reads TDFV.

It belongs to the EF-Ts family.

The protein localises to the cytoplasm. Associates with the EF-Tu.GDP complex and induces the exchange of GDP to GTP. It remains bound to the aminoacyl-tRNA.EF-Tu.GTP complex up to the GTP hydrolysis stage on the ribosome. The protein is Elongation factor Ts of Bartonella bacilliformis (strain ATCC 35685 / KC583 / Herrer 020/F12,63).